Here is a 306-residue protein sequence, read N- to C-terminus: ATP synthase F(1) complex subunit gamma, mitochondrial (306 aa).

Residues 1 to 17 (MNSASKLFVVLASPANQ) constitute a mitochondrion transit peptide.

This sequence belongs to the ATPase gamma chain family. In terms of assembly, component of the ATP synthase complex composed at least of ATP5F1A/subunit alpha, ATP5F1B/subunit beta, ATP5MC1/subunit c (homooctomer), MT-ATP6/subunit a, MT-ATP8/subunit 8, ATP5ME/subunit e, ATP5MF/subunit f, ATP5MG/subunit g, ATP5MK/subunit k, ATP5MJ/subunit j, ATP5F1C/subunit gamma, ATP5F1D/subunit delta, ATP5F1E/subunit epsilon, ATP5PF/subunit F6, ATP5PB/subunit b, ATP5PD/subunit d, ATP5PO/subunit OSCP. ATP synthase complex consists of a soluble F(1) head domain (subunits alpha(3) and beta(3)) - the catalytic core - and a membrane F(0) domain - the membrane proton channel (subunits c, a, 8, e, f, g, k and j). These two domains are linked by a central stalk (subunits gamma, delta, and epsilon) rotating inside the F1 region and a stationary peripheral stalk (subunits F6, b, d, and OSCP).

It localises to the mitochondrion inner membrane. Functionally, subunit gamma, of the mitochondrial membrane ATP synthase complex (F(1)F(0) ATP synthase or Complex V) that produces ATP from ADP in the presence of a proton gradient across the membrane which is generated by electron transport complexes of the respiratory chain. ATP synthase complex consist of a soluble F(1) head domain - the catalytic core - and a membrane F(1) domain - the membrane proton channel. These two domains are linked by a central stalk rotating inside the F(1) region and a stationary peripheral stalk. During catalysis, ATP synthesis in the catalytic domain of F(1) is coupled via a rotary mechanism of the central stalk subunits to proton translocation. In vivo, can only synthesize ATP although its ATP hydrolase activity can be activated artificially in vitro. With the central stalk subunit delta, is essential for the biogenesis of F(1) catalytic part of the ATP synthase complex namely in the formation of F1 assembly intermediate. This chain is ATP synthase F(1) complex subunit gamma, mitochondrial, found in Dictyostelium discoideum (Social amoeba).